The primary structure comprises 707 residues: GDNF-inducible zinc finger protein 1 (707 aa).

A BTB domain is found at 31 to 103; it reads CDVTVIVDYQ…VYTARVRVKE (73 aa). Polar residues predominate over residues 149–165; sequence VEASSGPQVSVTPSSKA. Disordered stretches follow at residues 149–221 and 243–309; these read VEAS…PKIR and RRLR…KDGE. Composition is skewed to basic and acidic residues over residues 198–213, 243–278, and 287–298; these read PSKK…KDVA, RRLR…EPAS, and VEREESLQKVEG. 10 consecutive C2H2-type zinc fingers follow at residues 316–338, 347–370, 376–399, 406–428, 434–456, 462–484, 490–512, 518–540, 546–568, and 574–596; these read FQCT…IKYH, YRCD…RHVH, FPCE…LQVH, HRCG…ERTH, YGCT…LRVH, FVCD…KRCH, FMCE…NRIH, FKCE…IKVH, YCCD…HRIH, and YMCN…TSIH. Serine 612 bears the Phosphoserine mark.

It belongs to the krueppel C2H2-type zinc-finger protein family. In terms of assembly, interacts with NCL.

It localises to the cytoplasm. Its subcellular location is the nucleus. It is found in the nucleoplasm. The protein localises to the nucleolus. Its function is as follows. Transcriptional repressor that binds the GZF1 responsive element (GRE) (consensus: 5'-TGCGCN[TG][CA]TATA-3'). May be regulating VSX2/HOX10 expression. The polypeptide is GDNF-inducible zinc finger protein 1 (Gzf1) (Rattus norvegicus (Rat)).